The following is a 1030-amino-acid chain: FACT complex subunit spt-16 (1030 aa).

Residues 424–445 adopt a coiled-coil conformation; the sequence is RLKSNVIKFKEEQENREAEKDN. 2 stretches are compositionally biased toward basic and acidic residues: residues 435–449 and 464–477; these read EQENREAEKDNDQKK and TRNKTTNEELRKER. Disordered regions lie at residues 435–477 and 491–514; these read EQEN…RKER and ARLSKQGGGTDEKKSKKSNVSYKT. Residues 623 to 645 are a coiled coil; it reads RLIKEMQKRFKTEEAEEREKEGA. Residues 927–1030 are disordered; that stretch reads VESDNEEAMD…KSGPSHKRRK (104 aa). 2 stretches are compositionally biased toward acidic residues: residues 929-951 and 958-983; these read SDNEEAMDDSDDSDAYDPEEEDA and ESDEDESEGEETESDDDDEGSLDSDE. A coiled-coil region spans residues 987 to 1007; the sequence is KDWSDLEEEAANADKRREVEE. A compositionally biased stretch (basic and acidic residues) spans 998–1014; sequence NADKRREVEEPSRDRDR. The segment covering 1015 to 1030 has biased composition (basic residues); sequence KRPHSSKSGPSHKRRK.

The protein belongs to the peptidase M24 family. SPT16 subfamily. Component of the FACT complex, a stable heterodimer of spt-16 and hmg-3 or hmg-4. As to expression, expressed in the germline and somatic cells.

It is found in the nucleus. It localises to the chromosome. Functionally, component of the FACT complex, a general chromatin factor that acts to reorganize nucleosomes. The FACT complex is involved in multiple processes that require DNA as a template such as mRNA elongation, DNA replication and DNA repair. During transcription elongation the FACT complex acts as a histone chaperone that both destabilizes and restores nucleosomal structure. It facilitates the passage of RNA polymerase II and transcription by promoting the dissociation of one histone H2A-H2B dimer from the nucleosome, then subsequently promotes the reestablishment of the nucleosome following the passage of RNA polymerase II. In embryos, promotes cell cycle progression and chromosomal segregation. Plays a role in the development of the anterior pharynx during embryonic development. The protein is FACT complex subunit spt-16 of Caenorhabditis elegans.